Consider the following 508-residue polypeptide: Photosystem II CP47 reaction center protein (508 aa).

6 helical membrane passes run 21-36 (SVHI…WAGS), 101-115 (IVFS…IWHW), 140-156 (GIHL…FGAF), 203-218 (IAAG…FHLS), 237-252 (VLSS…AFVV), and 457-472 (SFAL…HGAR).

This sequence belongs to the PsbB/PsbC family. PsbB subfamily. In terms of assembly, PSII is composed of 1 copy each of membrane proteins PsbA, PsbB, PsbC, PsbD, PsbE, PsbF, PsbH, PsbI, PsbJ, PsbK, PsbL, PsbM, PsbT, PsbX, PsbY, PsbZ, Psb30/Ycf12, at least 3 peripheral proteins of the oxygen-evolving complex and a large number of cofactors. It forms dimeric complexes. Binds multiple chlorophylls. PSII binds additional chlorophylls, carotenoids and specific lipids. serves as cofactor.

It is found in the plastid. It localises to the chloroplast thylakoid membrane. Functionally, one of the components of the core complex of photosystem II (PSII). It binds chlorophyll and helps catalyze the primary light-induced photochemical processes of PSII. PSII is a light-driven water:plastoquinone oxidoreductase, using light energy to abstract electrons from H(2)O, generating O(2) and a proton gradient subsequently used for ATP formation. The chain is Photosystem II CP47 reaction center protein from Eucalyptus globulus subsp. globulus (Tasmanian blue gum).